An 809-amino-acid polypeptide reads, in one-letter code: Sucrose synthase 4 (809 aa).

The segment at 275–753 (MIFNVVVVSP…GLQRIYEKYT (479 aa)) is GT-B glycosyltransferase.

Belongs to the glycosyltransferase 1 family. Plant sucrose synthase subfamily. Predominantly expressed in the leaf tissues and in caryopses.

The enzyme catalyses an NDP-alpha-D-glucose + D-fructose = a ribonucleoside 5'-diphosphate + sucrose + H(+). In terms of biological role, sucrose-cleaving enzyme that provides UDP-glucose and fructose for various metabolic pathways. The sequence is that of Sucrose synthase 4 (SUS4) from Oryza sativa subsp. japonica (Rice).